The following is a 161-amino-acid chain: ATP synthase subunit b (161 aa).

The helical transmembrane segment at 10–29 (SVIQLMSFFLLLYILKKFLY) threads the bilayer.

It belongs to the ATPase B chain family. As to quaternary structure, F-type ATPases have 2 components, F(1) - the catalytic core - and F(0) - the membrane proton channel. F(1) has five subunits: alpha(3), beta(3), gamma(1), delta(1), epsilon(1). F(0) has three main subunits: a(1), b(2) and c(10-14). The alpha and beta chains form an alternating ring which encloses part of the gamma chain. F(1) is attached to F(0) by a central stalk formed by the gamma and epsilon chains, while a peripheral stalk is formed by the delta and b chains.

Its subcellular location is the cell inner membrane. Its function is as follows. F(1)F(0) ATP synthase produces ATP from ADP in the presence of a proton or sodium gradient. F-type ATPases consist of two structural domains, F(1) containing the extramembraneous catalytic core and F(0) containing the membrane proton channel, linked together by a central stalk and a peripheral stalk. During catalysis, ATP synthesis in the catalytic domain of F(1) is coupled via a rotary mechanism of the central stalk subunits to proton translocation. In terms of biological role, component of the F(0) channel, it forms part of the peripheral stalk, linking F(1) to F(0). In Thermosipho melanesiensis (strain DSM 12029 / CIP 104789 / BI429), this protein is ATP synthase subunit b.